A 171-amino-acid polypeptide reads, in one-letter code: Cadmium-induced protein AS8 (171 aa).

This Arabidopsis thaliana (Mouse-ear cress) protein is Cadmium-induced protein AS8.